The primary structure comprises 290 residues: Pyridoxal kinase PdxY (290 aa).

Substrate contacts are provided by residues Ser12 and 47–48 (TQ). ATP-binding positions include Asp114, Glu151, Lys184, and 211–214 (RPLL). Asp225 lines the substrate pocket.

The protein belongs to the pyridoxine kinase family. PdxY subfamily. In terms of assembly, homodimer. Requires Mg(2+) as cofactor.

It carries out the reaction pyridoxal + ATP = pyridoxal 5'-phosphate + ADP + H(+). It functions in the pathway cofactor metabolism; pyridoxal 5'-phosphate salvage; pyridoxal 5'-phosphate from pyridoxal: step 1/1. Functionally, pyridoxal kinase involved in the salvage pathway of pyridoxal 5'-phosphate (PLP). Catalyzes the phosphorylation of pyridoxal to PLP. The chain is Pyridoxal kinase PdxY from Pseudomonas entomophila (strain L48).